The following is a 167-amino-acid chain: Cytochrome b6-f complex subunit 4 (167 aa).

The next 3 helical transmembrane spans lie at 36–56 (LLYI…GLAV), 95–115 (LLGV…PFLE), and 131–151 (TVFL…TLPI).

The protein belongs to the cytochrome b family. PetD subfamily. As to quaternary structure, the 4 large subunits of the cytochrome b6-f complex are cytochrome b6, subunit IV (17 kDa polypeptide, petD), cytochrome f and the Rieske protein, while the 4 small subunits are petG, petL, petM and petN. The complex functions as a dimer.

The protein localises to the plastid. It is found in the chloroplast thylakoid membrane. In terms of biological role, component of the cytochrome b6-f complex, which mediates electron transfer between photosystem II (PSII) and photosystem I (PSI), cyclic electron flow around PSI, and state transitions. This chain is Cytochrome b6-f complex subunit 4, found in Calycanthus floridus var. glaucus (Eastern sweetshrub).